We begin with the raw amino-acid sequence, 349 residues long: S-adenosylmethionine:tRNA ribosyltransferase-isomerase (349 aa).

Belongs to the QueA family. Monomer.

The protein localises to the cytoplasm. It catalyses the reaction 7-aminomethyl-7-carbaguanosine(34) in tRNA + S-adenosyl-L-methionine = epoxyqueuosine(34) in tRNA + adenine + L-methionine + 2 H(+). Its pathway is tRNA modification; tRNA-queuosine biosynthesis. Transfers and isomerizes the ribose moiety from AdoMet to the 7-aminomethyl group of 7-deazaguanine (preQ1-tRNA) to give epoxyqueuosine (oQ-tRNA). The protein is S-adenosylmethionine:tRNA ribosyltransferase-isomerase of Pseudomonas putida (strain GB-1).